We begin with the raw amino-acid sequence, 300 residues long: GTPase Era (300 aa).

One can recognise an Era-type G domain in the interval 8 to 176 (RCGYVAIVGR…ERLVAGRLPQ (169 aa)). The G1 stretch occupies residues 16-23 (GRPNVGKS). Position 16-23 (16-23 (GRPNVGKS)) interacts with GTP. The G2 stretch occupies residues 42–46 (QTTRH). The G3 stretch occupies residues 63-66 (DTPG). Residues 63 to 67 (DTPGL) and 125 to 128 (NKAD) each bind GTP. A G4 region spans residues 125-128 (NKAD). Residues 155–157 (ISA) are G5. Positions 199 to 283 (VREKIMRQLG…MLNLWVKVKG (85 aa)) constitute a KH type-2 domain.

The protein belongs to the TRAFAC class TrmE-Era-EngA-EngB-Septin-like GTPase superfamily. Era GTPase family. Monomer.

The protein localises to the cytoplasm. It localises to the cell inner membrane. Functionally, an essential GTPase that binds both GDP and GTP, with rapid nucleotide exchange. Plays a role in 16S rRNA processing and 30S ribosomal subunit biogenesis and possibly also in cell cycle regulation and energy metabolism. This Azotobacter vinelandii (strain DJ / ATCC BAA-1303) protein is GTPase Era.